The chain runs to 139 residues: Myosin light chain kinase, smooth muscle (139 aa).

The disordered stretch occupies residues 48–97; that stretch reads APTGENAKAPEMKARRPKSSLPPVLGTESDATVKKKPAPKTPPKAAMPPQ.

Belongs to the protein kinase superfamily. CAMK Ser/Thr protein kinase family. In terms of assembly, interacts with SVIL. The C-terminus is deglutamylated by AGTPBP1/CCP1, AGBL1/CCP4 and AGBL4/CCP6, leading to the formation of Myosin light chain kinase, smooth muscle, deglutamylated form. The consequences of C-terminal deglutamylation are unknown.

It carries out the reaction L-seryl-[myosin light chain] + ATP = O-phospho-L-seryl-[myosin light chain] + ADP + H(+). The enzyme catalyses L-threonyl-[myosin light chain] + ATP = O-phospho-L-threonyl-[myosin light chain] + ADP + H(+). Its function is as follows. Phosphorylates a specific serine in the N-terminus of a myosin light chain. Also regulates actin-myosin interaction through a non-kinase activity. The sequence is that of Myosin light chain kinase, smooth muscle (MYLK) from Sus scrofa (Pig).